We begin with the raw amino-acid sequence, 188 residues long: Inner membrane-spanning protein YciB (188 aa).

Transmembrane regions (helical) follow at residues Ile22–Met42, Met50–Asn70, Leu72–Ser92, Phe121–Leu141, and Phe149–Ile169.

The protein belongs to the YciB family.

The protein resides in the cell inner membrane. Its function is as follows. Plays a role in cell envelope biogenesis, maintenance of cell envelope integrity and membrane homeostasis. This Pectobacterium carotovorum subsp. carotovorum (strain PC1) protein is Inner membrane-spanning protein YciB.